Consider the following 447-residue polypeptide: N-succinylarginine dihydrolase (447 aa).

Residues 19 to 28, N110, and 137 to 138 each bind substrate; these read AGLSFGNEAS and HR. E174 is an active-site residue. Residue R213 coordinates substrate. H249 is an active-site residue. Substrate is bound by residues D251 and N364. C370 (nucleophile) is an active-site residue.

It belongs to the succinylarginine dihydrolase family. In terms of assembly, homodimer.

It catalyses the reaction N(2)-succinyl-L-arginine + 2 H2O + 2 H(+) = N(2)-succinyl-L-ornithine + 2 NH4(+) + CO2. The protein operates within amino-acid degradation; L-arginine degradation via AST pathway; L-glutamate and succinate from L-arginine: step 2/5. In terms of biological role, catalyzes the hydrolysis of N(2)-succinylarginine into N(2)-succinylornithine, ammonia and CO(2). This Yersinia pestis bv. Antiqua (strain Antiqua) protein is N-succinylarginine dihydrolase.